The sequence spans 288 residues: ATP synthase gamma chain (288 aa).

It belongs to the ATPase gamma chain family. As to quaternary structure, F-type ATPases have 2 components, CF(1) - the catalytic core - and CF(0) - the membrane proton channel. CF(1) has five subunits: alpha(3), beta(3), gamma(1), delta(1), epsilon(1). CF(0) has three main subunits: a, b and c.

The protein localises to the cell inner membrane. In terms of biological role, produces ATP from ADP in the presence of a proton gradient across the membrane. The gamma chain is believed to be important in regulating ATPase activity and the flow of protons through the CF(0) complex. The polypeptide is ATP synthase gamma chain (Chromobacterium violaceum (strain ATCC 12472 / DSM 30191 / JCM 1249 / CCUG 213 / NBRC 12614 / NCIMB 9131 / NCTC 9757 / MK)).